A 356-amino-acid chain; its full sequence is Phosphoribosyl pyrophosphate synthase-associated protein 1 (356 aa).

Met-1 bears the N-acetylmethionine mark. Phosphoserine is present on residues Ser-177 and Ser-215.

It belongs to the ribose-phosphate pyrophosphokinase family. In terms of assembly, binds to PRPS1 and PRPS2.

Functionally, seems to play a negative regulatory role in 5-phosphoribose 1-diphosphate synthesis. The sequence is that of Phosphoribosyl pyrophosphate synthase-associated protein 1 (PRPSAP1) from Bos taurus (Bovine).